The sequence spans 133 residues: Large ribosomal subunit protein uL15 (133 aa).

A disordered region spans residues 1-64; that stretch reads MGLENLKPAK…QPLQRRLPKI (64 aa).

Belongs to the universal ribosomal protein uL15 family. Part of the 50S ribosomal subunit.

Functionally, binds to the 23S rRNA. The chain is Large ribosomal subunit protein uL15 from Helicobacter pylori (strain Shi470).